Consider the following 105-residue polypeptide: Hydrogen cyanide synthase subunit HcnA (105 aa).

A 2Fe-2S ferredoxin-type domain is found at 16–97 (ADMTISLNGQ…GMQVQTLSNR (82 aa)). [2Fe-2S] cluster contacts are provided by Cys60, Cys65, Cys68, and Cys81.

In terms of assembly, heterotrimer of HcnA, HcnB and HcnC.

It localises to the cell membrane. It catalyses the reaction glycine + 2 A = hydrogen cyanide + 2 AH2 + CO2. A three-component membrane-bound flavoenzyme that catalyzes the formation of hydrogen cyanide, a secondary metabolite, by transfer of electrons to a cyanide-resistant branch of the aerobic respiratory chain. Contributes to suppression of black root rot of tobacco. The chain is Hydrogen cyanide synthase subunit HcnA from Pseudomonas protegens (strain DSM 19095 / LMG 27888 / CFBP 6595 / CHA0).